The primary structure comprises 440 residues: GTPase Der (440 aa).

2 EngA-type G domains span residues 5 to 167 (ATVA…PEQE) and 178 to 353 (IMLS…KEHS). GTP-binding positions include 11–18 (GRPNVGKS), 58–62 (DTGGI), 120–123 (NKSE), 184–191 (GRPNVGKS), 231–235 (DTAGL), and 296–299 (NKWD). A KH-like domain is found at 354-438 (KRITTADVNR…PIRILERVKQ (85 aa)).

This sequence belongs to the TRAFAC class TrmE-Era-EngA-EngB-Septin-like GTPase superfamily. EngA (Der) GTPase family. In terms of assembly, associates with the 50S ribosomal subunit.

GTPase that plays an essential role in the late steps of ribosome biogenesis. The polypeptide is GTPase Der (Natranaerobius thermophilus (strain ATCC BAA-1301 / DSM 18059 / JW/NM-WN-LF)).